The following is a 1019-amino-acid chain: Katanin p80 WD40 repeat-containing subunit B1 homolog KTN80.1 (1019 aa).

7 WD repeats span residues 13-53 (AHSG…SPMS), 56-95 (GHTS…MVRA), 98-137 (GHRS…CIQT), 140-181 (GHTR…HEFK), 183-221 (HEGP…LIGT), 224-264 (PEAT…DGVD), and 266-303 (GWST…LEPY). The DWD box motif lies at 114-130 (FLASGSSDTNLRVWDTR). Disordered stretches follow at residues 388–424 (FGPA…TKSG), 455–474 (KSGL…LSEQ), 517–581 (IHRS…GSRE), and 607–652 (RGEK…RARS). The segment covering 465 to 474 (QTQNAFLSEQ) has biased composition (polar residues). The segment covering 553–572 (IPSKTERVLSREKPGDEQKN) has biased composition (basic and acidic residues). Positions 614-628 (TEGASTTIEQNNNAV) are enriched in polar residues.

This sequence belongs to the WD repeat KATNB1 family. As to quaternary structure, component of KTN80-KTN1 complexes composed of a hexamer of KTN1-KTN80 heterodimers that sense microtubule (MT) geometry to confer precise MT severing. Interacts directly with AAA1/KTN1 and KTN80.3, and weakly with KTN80.4. Expressed at low levels in siliques, flowers, leaves, stems and roots.

Its subcellular location is the cytoplasm. It is found in the cytoskeleton. In terms of biological role, may participate in a complex which severs microtubules in an ATP-dependent manner. Microtubule severing may promote rapid reorganization of cellular microtubule arrays. Confers precision to microtubule (MT) severing by specific targeting of KTN1 to MT cleavage sites such as crossover or branching nucleation sites. Together with other KTN80s, regulates cell elongation by modulating MT organization. In Arabidopsis thaliana (Mouse-ear cress), this protein is Katanin p80 WD40 repeat-containing subunit B1 homolog KTN80.1.